Consider the following 137-residue polypeptide: LVAVCVSLLGAANIPPQPLNLYQLMNMIQCANTRTWPSYTNYGCYCGKGGSGTPVDDLDRCCYTHDHCYNDAKNIDGCNPVTKTYSYTCTEPTITCNDSKDKCARFVCDCDRTAAICFAKAPYNTSNVMIRSTNSCQ.

A signal peptide spans 1–11; the sequence is LVAVCVSLLGA. Positions 12 to 19 are excised as a propeptide; that stretch reads ANIPPQPL. 7 cysteine pairs are disulfide-bonded: C30-C89, C44-C136, C46-C62, C61-C117, C68-C110, C78-C103, and C96-C108. Y45, G47, and G49 together coordinate Ca(2+). Residues G49 and H65 each contribute to the tridecanoate site. H65 is a catalytic residue. D66 contacts Ca(2+). Residue D111 is part of the active site.

In terms of assembly, monomer. Requires Ca(2+) as cofactor. In terms of tissue distribution, expressed by the venom gland.

Its subcellular location is the secreted. It carries out the reaction a 1,2-diacyl-sn-glycero-3-phosphocholine + H2O = a 1-acyl-sn-glycero-3-phosphocholine + a fatty acid + H(+). Its function is as follows. Snake venom phospholipase A2 (PLA2) that shows anticoagulant and neurotoxic activities. PLA2 catalyzes the calcium-dependent hydrolysis of the 2-acyl groups in 3-sn-phosphoglycerides. This is Acidic phospholipase A2 1 from Bungarus caeruleus (Indian krait).